Consider the following 319-residue polypeptide: G-protein coupled receptor 171 (319 aa).

Over 1–21 the chain is Extracellular; it reads MTNSSTFCPVYRDLEPFTYFF. Residue Asn3 is glycosylated (N-linked (GlcNAc...) asparagine). The chain crosses the membrane as a helical span at residues 22-42; the sequence is YLVFLIGIIGSCFATWAFIQK. Residues 43-48 lie on the Cytoplasmic side of the membrane; that stretch reads TTNHRC. The chain crosses the membrane as a helical span at residues 49-69; the sequence is VSIYLINLLTADFLLTLALPV. The Extracellular portion of the chain corresponds to 70–89; it reads KIIVDLGVAPWKLRIFHCQV. A helical membrane pass occupies residues 90–110; that stretch reads TACLIYINMYLSIIFLAFVSI. At 111–132 the chain is on the cytoplasmic side; sequence DRCLQLIHSCKIYRIQEPGFAK. The chain crosses the membrane as a helical span at residues 133–153; that stretch reads MISAVVWLMVLLIMVPNMVIP. The Extracellular segment spans residues 154 to 181; that stretch reads IKDIKEKSNVGCMEFKKEFGRNWHLLTN. The chain crosses the membrane as a helical span at residues 182 to 202; the sequence is FICVAIFLNFSVIILISNFLA. Over 203–224 the chain is Cytoplasmic; that stretch reads IRQLYRNRDNTNYPSVKSALLH. A helical membrane pass occupies residues 225-245; that stretch reads ILLVTASYIICFVPYHAVRIP. The Extracellular segment spans residues 246–268; sequence YTLSQTEVISDCSTRIALFKAKE. A helical membrane pass occupies residues 269–289; that stretch reads ATLLLAVSNLCFDPILYYHLS. Residues 290–319 lie on the Cytoplasmic side of the membrane; the sequence is KAFRLKVTETFASPKKSKPLEERLRSENDV.

Belongs to the G-protein coupled receptor 1 family. As to expression, highly expressed in hypothalamus, including the arcuate nucleus, paraventricular nucleus and dorsomedial hypothalamus. Expressed in periaqueductal gray (at protein level), found primarily in GABAergic neurons and to a lesser extent in glutamatergic neurons. Expressed in T cells and natural killer cells.

The protein localises to the cell membrane. Its function is as follows. G-protein coupled receptor for Big LEN, a 16-amino acid neuropeptide produced from the precursor protein, proSAAS (encoded by PCSK1N). Acts through a G(i)-alpha-mediated pathway in response to Big LEN. Big LEN-GPR171 system plays an important role in regulating feeding and metabolism. Also plays a role in modulating fear and anxiety-like behaviors in the basolateral amygdala. Big LEN-GPR171 modulates the mu-type opioid receptor signaling and antinociception. Acts as a negative regulator T cell function. This Mus musculus (Mouse) protein is G-protein coupled receptor 171 (Gpr171).